The primary structure comprises 1197 residues: MQPWQCLRRFALAWWERTAEGRARSPREEVGPRDPGGRGEPDPERSSPPMLSADDAEYPREYRTLGGGGSGGSGGRRFSNVGLVHTSERRHTVIAAQSLEALSGLQKADADRKRDAFMDHLKSKYPQHALALRGQQDRMREQQPNYWSFKTRSSRHTQGAQPGLADQAAKLSYASAESLETMSEAELPLGFSRMNRFRQSLPLSRSASQTKLRSPGVLFLQFGEETRRVHITHEVSSLDTLHALIAHMFPQKLTMGMLKSPNTAILIKDEARNVFYELEDVRDIQDRSIIKIYRKEPLYAAFPGSHLTNGDLRREMVYASRESSPTRRLNNLSPASHLASSSPPPGLPSGLPSGLPSGSPSRSRLSYAGGRPPSYAGSPVHHAAERLGGAPTSQGVSPSPSAILERRDVKPDEDLAGKAGGMVLVKGEGLYADPYGLLHEGRLSLAAAAGDPFAYPGAGGLYKRGSVRSLSTYSAAALQSDLEDSLYKAGAGGPLYGDGYGFRLPPSSPQKLADVSAPSGGPPPPHSPYSGPPSRGSPVRQSFRKDSGSSSVFAESPGGKARSTGASTAGAPPSELFPGPGERSLVGFGPPVPAKDTETRERMEAMEKQIASLTGLVQSALLRGSEPETPSEKIEGSNGAATPSAPVCGSGSRSSGATPVSGPPPPAVSSTPAGQPTAVSRLQMQMHLRGLQNSASDLRGQLQQLRKLQLQNQESVRALLKRTEAELSMRVSEAARRQEDPLQRQRTLVEEERLRYLNDEELITQQLNDLEKSVEKIQRDVAHNHRLVPGPELEEKALVLKQLGETLTELKAHFPGLQSKMRVVLRVEVEAVKFLKEEPQRLDGLLKRCRVVTDTLAQIRRQVDEGVWPPPNNLLNQSPKKVAAETDFSKGLDFEIPPPSPPLNLHELSGPAEGTPLTPKSGNPTKGLDAPSKRNMDKAVSVEAAERDWEEKRAALTQYSAKDINRLLEETQAELLKAIPDLDCASKTHPGPTPTPDHKPPKAPHGQKAAPRTEPSGRRGSDELTVPRYRTEKPSKSPPPPPPRRSFPSSHGLTTTRTGEVVVTSKKDSVFIKKAESEELEIQKPQVKLRRAVSEVVRPASTPPIMASAIKDEDDEERIIAELESGGGSVPPMKVVTPGASRLKAAQGPAGSPDKGKHGKQRTEYMRIQAQQQVRVGYQAPRPLEGCTPRLCYMPLS.

Residues 19–45 are compositionally biased toward basic and acidic residues; sequence AEGRARSPREEVGPRDPGGRGEPDPER. The segment at 19 to 80 is disordered; sequence AEGRARSPRE…GGSGGRRFSN (62 aa). A phosphoserine mark is found at Ser-47 and Ser-52. Over residues 65 to 75 the composition is skewed to gly residues; sequence LGGGGSGGSGG. Ser-79 is modified (phosphoserine). Thr-86 is modified (phosphothreonine). 7 positions are modified to phosphoserine: Ser-87, Ser-98, Ser-178, Ser-200, Ser-204, Ser-214, and Ser-260. Tyr-276 is modified (phosphotyrosine). Positions 319–415 are disordered; it reads ASRESSPTRR…RRDVKPDEDL (97 aa). The span at 321-331 shows a compositional bias: polar residues; sequence RESSPTRRLNN. A compositionally biased stretch (low complexity) spans 332-341; it reads LSPASHLASS. 3 positions are modified to phosphoserine: Ser-333, Ser-342, and Ser-359. Residues 348–366 are compositionally biased toward low complexity; it reads PSGLPSGLPSGSPSRSRLS. 2 positions are modified to omega-N-methylarginine: Arg-364 and Arg-371. Phosphoserine occurs at positions 378, 397, and 399. Positions 391 to 400 are enriched in polar residues; it reads PTSQGVSPSP. The segment covering 404 to 415 has biased composition (basic and acidic residues); that stretch reads LERRDVKPDEDL. Residue Tyr-431 is modified to Phosphotyrosine. Residues 501-676 form a disordered region; that stretch reads GFRLPPSSPQ…AVSSTPAGQP (176 aa). Pro residues predominate over residues 520–531; the sequence is GGPPPPHSPYSG. 3 positions are modified to phosphoserine: Ser-527, Ser-530, and Ser-534. Arg-535 is subject to Omega-N-methylarginine. Phosphoserine occurs at positions 537, 547, 549, 551, and 556. The span at 595–607 shows a compositional bias: basic and acidic residues; it reads KDTETRERMEAME. A phosphoserine mark is found at Ser-631 and Ser-655. Thr-658 and Thr-671 each carry phosphothreonine. Residues 681–731 form an interaction with SNAP25 region; that stretch reads RLQMQMHLRGLQNSASDLRGQLQQLRKLQLQNQESVRALLKRTEAELSMRV. Coiled-coil stretches lie at residues 688-708 and 760-780; these read LRGL…LRKL and EELI…IQRD. Residues Ser-878 and Ser-900 each carry the phosphoserine modification. Disordered stretches follow at residues 891-949 and 983-1065; these read GLDF…ERDW and DCAS…VVTS. The residue at position 918 (Thr-918) is a Phosphothreonine. Ser-1021 carries the post-translational modification Phosphoserine. Pro residues predominate over residues 1036–1045; that stretch reads KSPPPPPPRR. Residues Ser-1077 and Ser-1094 each carry the phosphoserine modification. The interval 1141–1163 is disordered; the sequence is SRLKAAQGPAGSPDKGKHGKQRT.

It belongs to the SRCIN1 family. In terms of assembly, interacts with BCAR1/p130Cas through its C-terminal domain and with CSK, CTTN and SRC. Also interacts with MAPRE3/EB3, SORBS3/vinexin and the N-terminal coiled-coil region of SNAP25. In terms of processing, tyrosine-phosphorylated in response to EGF and to cell adhesion to integrin ligands. Expressed exclusively in brain. Abundant in telencephalon and expressed moderately in cerebellum, hypothalamus, thalamus, superior and inferior colliculi, and olfactory bulb. No expression detected in medulla oblongata, spinal cord or pituitary gland. Enriched in the neuropil rather than soma in the thalamus, corpus striatum and cerebral cortex. Detected in astrocytes.

It localises to the cytoplasm. It is found in the cytoskeleton. The protein resides in the cell projection. Its subcellular location is the axon. The protein localises to the dendrite. It localises to the presynapse. It is found in the postsynapse. The protein resides in the postsynaptic density. Functionally, acts as a negative regulator of SRC by activating CSK which inhibits SRC activity and downstream signaling, leading to impaired cell spreading and migration. Regulates dendritic spine morphology. Involved in calcium-dependent exocytosis. May play a role in neurotransmitter release or synapse maintenance. This Rattus norvegicus (Rat) protein is SRC kinase signaling inhibitor 1.